A 993-amino-acid polypeptide reads, in one-letter code: UPF0182 protein Sare_4110 (993 aa).

7 helical membrane passes run Ile-18–Trp-38, Leu-61–Leu-81, Leu-110–Gln-130, Gly-171–Phe-191, Ala-209–Asp-229, Ile-260–Met-280, and Leu-283–Ile-303. Disordered stretches follow at residues Gln-892 to Ala-937 and Glu-974 to Gly-993. The span at Ser-900–Val-929 shows a compositional bias: pro residues. Over residues Ala-976–Gly-993 the composition is skewed to low complexity.

It belongs to the UPF0182 family.

It localises to the cell membrane. This is UPF0182 protein Sare_4110 from Salinispora arenicola (strain CNS-205).